We begin with the raw amino-acid sequence, 920 residues long: Ubiquitin ligase-binding protein BUL2 (920 aa).

Polar residues predominate over residues 1 to 10; the sequence is MTFTFSTSSR. The disordered stretch occupies residues 1–89; the sequence is MTFTFSTSSR…EENSLEMDCT (89 aa). Thr-22 bears the Phosphothreonine mark. Positions 35–57 are enriched in polar residues; sequence QQLSSNSTDNSLHPNSGQTPRAS. A compositionally biased stretch (basic and acidic residues) spans 73–82; that stretch reads DRLRQEREEN. The PY-motif motif lies at 129–133; it reads FPPSY. Ser-557 is subject to Phosphoserine.

The protein belongs to the BUL1 family. Component of the RSP5-BUL1/2 ubiquitin ligase complex composed of at least RSP5 and BUL1 or BUL2.

It localises to the cytoplasm. Its pathway is protein modification; protein ubiquitination. Component of a RSP5 ubiquitin ligase complex which specifies polyubiquitination and intracellular trafficking of the general amino acid permease GAP1 as well as other permeases such as PMA1. The RSP5-BUL1/2 complex is also necessary for the heat-shock element (HSE)-mediated gene expression, nitrogen starvation GLN3-dependent transcription and pressure-induced differential regulation of the 2 tryptophan permeases TAT1 and TAT2. In Saccharomyces cerevisiae (strain ATCC 204508 / S288c) (Baker's yeast), this protein is Ubiquitin ligase-binding protein BUL2 (BUL2).